Reading from the N-terminus, the 918-residue chain is Chaperone protein ClpC1, chloroplastic (918 aa).

The region spanning 88–230 is the Clp R domain; that stretch reads FERFTEKAIK…RTQVIRMVGE (143 aa). Repeat stretches follow at residues 91-156 and 166-230; these read FTEK…IGRG and FTPR…MVGE. The interval 251–498 is i; that stretch reads LEEYGTNLTK…RVRLRHAQLP (248 aa). Residue 296–303 coordinates ATP; that stretch reads GEPGVGKT. The UVR domain occupies 505 to 540; that stretch reads DKELRQVTKDKNEAVRGQDFEKAGELRDREMELKAQ. Positions 565–756 are II; the sequence is VTEADIQHIV…LLIMTSNVGS (192 aa). Position 639–646 (639–646) interacts with ATP; that stretch reads GPTGVGKS.

This sequence belongs to the ClpA/ClpB family. ClpC subfamily. In terms of tissue distribution, widely expressed.

The protein resides in the plastid. It localises to the chloroplast. Molecular chaperone that may interact with a ClpP-like protease involved in degradation of denatured proteins in the chloroplast. This chain is Chaperone protein ClpC1, chloroplastic (CLPC1), found in Oryza sativa subsp. japonica (Rice).